The chain runs to 394 residues: MNKYKRIFLVVMDSVGIGEAPDAEQFGDLGSDTIGHIAEHMNGLQMPNMVKLGLGNIREMKGISKVEKPLGYYTKMQEKSTGKDTMTGHWEIMGLYIDTPFQVFPEGFPKELLDELEEKTGRKIIGNKPASGTEILDELGQEQMETGSLIVYTSADSVLQIAAHEEVVPLDELYKICKIARELTLDEKYMVGRVIARPFVGEPGNFTRTPNRHDYALKPFGRTVMNELKDSDYDVIAIGKISDIYDGEGVTESLRTKSNMDGMDKLVDTLNMDFTGLSFLNLVDFDALFGHRRDPQGYGEALQEYDARLPEVFAKLKEDDLLLITADHGNDPIHPGTDHTREYVPLLAYSPSMKEGGQELPLRQTFADIGATVAENFGVKMPEYGTSFLNELKK.

Positions 13, 286, 291, 327, 328, and 339 each coordinate Mn(2+).

It belongs to the phosphopentomutase family. It depends on Mn(2+) as a cofactor.

Its subcellular location is the cytoplasm. The enzyme catalyses 2-deoxy-alpha-D-ribose 1-phosphate = 2-deoxy-D-ribose 5-phosphate. The catalysed reaction is alpha-D-ribose 1-phosphate = D-ribose 5-phosphate. The protein operates within carbohydrate degradation; 2-deoxy-D-ribose 1-phosphate degradation; D-glyceraldehyde 3-phosphate and acetaldehyde from 2-deoxy-alpha-D-ribose 1-phosphate: step 1/2. In terms of biological role, isomerase that catalyzes the conversion of deoxy-ribose 1-phosphate (dRib-1-P) and ribose 1-phosphate (Rib-1-P) to deoxy-ribose 5-phosphate (dRib-5-P) and ribose 5-phosphate (Rib-5-P), respectively. This is Phosphopentomutase from Bacillus cereus (strain B4264).